Reading from the N-terminus, the 129-residue chain is Small ribosomal subunit protein uS9 (129 aa).

This sequence belongs to the universal ribosomal protein uS9 family.

This chain is Small ribosomal subunit protein uS9, found in Gemmatimonas aurantiaca (strain DSM 14586 / JCM 11422 / NBRC 100505 / T-27).